Here is a 257-residue protein sequence, read N- to C-terminus: Major prion protein (257 aa).

The N-terminal stretch at 1–24 is a signal peptide; sequence MVKSHIGGWILLLFVATWSDVGLC. The interaction with GRB2, ERI3 and SYN1 stretch occupies residues 25 to 234; sequence KKRPKPGGWN…ESEAYYQRGA (210 aa). Residues 28–110 form a disordered region; the sequence is PKPGGWNTGG…GQWGKPNKPK (83 aa). Composition is skewed to gly residues over residues 33–48 and 55–101; these read WNTG…GSPG and QGGG…GSHG. 5 consecutive repeat copies span residues 54 to 62, 63 to 70, 71 to 78, 79 to 86, and 87 to 95. The 5 X 8 AA tandem repeats of P-H-G-G-G-W-G-Q stretch occupies residues 54–95; the sequence is PQGGGGWGQPHGGGWGQPHGGGWGQPHGGGWGQPHGGGGWGQ. Residues histidine 64, glycine 65, glycine 66, histidine 72, glycine 73, glycine 74, histidine 80, glycine 81, glycine 82, histidine 88, glycine 90, and glycine 91 each contribute to the Cu(2+) site. Cysteine 183 and cysteine 218 are oxidised to a cystine. Asparagine 185 and asparagine 201 each carry an N-linked (GlcNAc...) asparagine glycan. Alanine 234 is lipidated: GPI-anchor amidated alanine. The propeptide at 235-257 is removed in mature form; that stretch reads SAILFSPPPVILLISLLILLIVG.

This sequence belongs to the prion family. In terms of assembly, monomer and homodimer. Has a tendency to aggregate into amyloid fibrils containing a cross-beta spine, formed by a steric zipper of superposed beta-strands. Soluble oligomers may represent an intermediate stage on the path to fibril formation. Copper binding may promote oligomerization. Interacts with GRB2, APP, ERI3/PRNPIP and SYN1. Mislocalized cytosolically exposed PrP interacts with MGRN1; this interaction alters MGRN1 subcellular location and causes lysosomal enlargement. Interacts with KIAA1191.

The protein localises to the cell membrane. It localises to the golgi apparatus. Its function is as follows. Its primary physiological function is unclear. Has cytoprotective activity against internal or environmental stresses. May play a role in neuronal development and synaptic plasticity. May be required for neuronal myelin sheath maintenance. May play a role in iron uptake and iron homeostasis. Soluble oligomers are toxic to cultured neuroblastoma cells and induce apoptosis (in vitro). Association with GPC1 (via its heparan sulfate chains) targets PRNP to lipid rafts. Also provides Cu(2+) or Zn(2+) for the ascorbate-mediated GPC1 deaminase degradation of its heparan sulfate side chains. This is Major prion protein from Vulpes lagopus (Arctic fox).